Here is a 196-residue protein sequence, read N- to C-terminus: Molybdenum cofactor guanylyltransferase (196 aa).

GTP contacts are provided by residues 10–12 (LAG), K23, N51, D69, and D99. D99 lines the Mg(2+) pocket.

This sequence belongs to the MobA family. Monomer. Mg(2+) is required as a cofactor.

Its subcellular location is the cytoplasm. The enzyme catalyses Mo-molybdopterin + GTP + H(+) = Mo-molybdopterin guanine dinucleotide + diphosphate. In terms of biological role, transfers a GMP moiety from GTP to Mo-molybdopterin (Mo-MPT) cofactor (Moco or molybdenum cofactor) to form Mo-molybdopterin guanine dinucleotide (Mo-MGD) cofactor. This Shewanella woodyi (strain ATCC 51908 / MS32) protein is Molybdenum cofactor guanylyltransferase.